A 932-amino-acid chain; its full sequence is Isoleucine--tRNA ligase (932 aa).

Residues 58–68 carry the 'HIGH' region motif; the sequence is PYANGNLHLGH. E567 contacts L-isoleucyl-5'-AMP. Positions 608–612 match the 'KMSKS' region motif; sequence KMSKS. K611 lines the ATP pocket. Zn(2+) is bound by residues C895, C898, C915, and C918.

It belongs to the class-I aminoacyl-tRNA synthetase family. IleS type 1 subfamily. In terms of assembly, monomer. Requires Zn(2+) as cofactor.

Its subcellular location is the cytoplasm. The catalysed reaction is tRNA(Ile) + L-isoleucine + ATP = L-isoleucyl-tRNA(Ile) + AMP + diphosphate. Its function is as follows. Catalyzes the attachment of isoleucine to tRNA(Ile). As IleRS can inadvertently accommodate and process structurally similar amino acids such as valine, to avoid such errors it has two additional distinct tRNA(Ile)-dependent editing activities. One activity is designated as 'pretransfer' editing and involves the hydrolysis of activated Val-AMP. The other activity is designated 'posttransfer' editing and involves deacylation of mischarged Val-tRNA(Ile). In Azoarcus sp. (strain BH72), this protein is Isoleucine--tRNA ligase.